We begin with the raw amino-acid sequence, 95 residues long: Small ribosomal subunit protein bS6 (95 aa).

Belongs to the bacterial ribosomal protein bS6 family.

In terms of biological role, binds together with bS18 to 16S ribosomal RNA. This is Small ribosomal subunit protein bS6 from Onion yellows phytoplasma (strain OY-M).